Consider the following 153-residue polypeptide: Xanthine-guanine phosphoribosyltransferase (153 aa).

5-phospho-alpha-D-ribose 1-diphosphate contacts are provided by residues 37 to 38, R69, and 88 to 96; these read RG and DDLVDTGGT. R69 serves as a coordination point for GMP. Residue D89 participates in Mg(2+) binding. 2 residues coordinate guanine: D92 and I135. The xanthine site is built by D92 and I135. GMP is bound by residues 92–96 and 134–135; these read DTGGT and WI.

The protein belongs to the purine/pyrimidine phosphoribosyltransferase family. XGPT subfamily. Homotetramer. Requires Mg(2+) as cofactor.

It localises to the cell inner membrane. The enzyme catalyses GMP + diphosphate = guanine + 5-phospho-alpha-D-ribose 1-diphosphate. It carries out the reaction XMP + diphosphate = xanthine + 5-phospho-alpha-D-ribose 1-diphosphate. It catalyses the reaction IMP + diphosphate = hypoxanthine + 5-phospho-alpha-D-ribose 1-diphosphate. It functions in the pathway purine metabolism; GMP biosynthesis via salvage pathway; GMP from guanine: step 1/1. Its pathway is purine metabolism; XMP biosynthesis via salvage pathway; XMP from xanthine: step 1/1. Purine salvage pathway enzyme that catalyzes the transfer of the ribosyl-5-phosphate group from 5-phospho-alpha-D-ribose 1-diphosphate (PRPP) to the N9 position of the 6-oxopurines guanine and xanthine to form the corresponding ribonucleotides GMP (guanosine 5'-monophosphate) and XMP (xanthosine 5'-monophosphate), with the release of PPi. To a lesser extent, also acts on hypoxanthine. This is Xanthine-guanine phosphoribosyltransferase from Photorhabdus laumondii subsp. laumondii (strain DSM 15139 / CIP 105565 / TT01) (Photorhabdus luminescens subsp. laumondii).